Here is a 721-residue protein sequence, read N- to C-terminus: BBSome complex member BBS2 (721 aa).

A coiled-coil region spans residues arginine 325 to glutamate 369.

Part of BBSome complex, that contains BBS1, BBS2, BBS4, BBS5, BBS7, BBS8/TTC8, BBS9 and BBIP10. Interacts (via C-terminus) with BBS7. Interacts (via coiled coil domain) with MKKS. Interacts with CCDC28B and ALDOB. Interacts with DLEC1. In terms of tissue distribution, widely expressed.

The protein localises to the cell projection. The protein resides in the cilium membrane. It is found in the cytoplasm. It localises to the cytoskeleton. Its subcellular location is the microtubule organizing center. The protein localises to the centrosome. The protein resides in the centriolar satellite. Its function is as follows. The BBSome complex is thought to function as a coat complex required for sorting of specific membrane proteins to the primary cilia. The BBSome complex is required for ciliogenesis but is dispensable for centriolar satellite function. This ciliogenic function is mediated in part by the Rab8 GDP/GTP exchange factor, which localizes to the basal body and contacts the BBSome. Rab8(GTP) enters the primary cilium and promotes extension of the ciliary membrane. Firstly the BBSome associates with the ciliary membrane and binds to RAB3IP/Rabin8, the guanosyl exchange factor (GEF) for Rab8 and then the Rab8-GTP localizes to the cilium and promotes docking and fusion of carrier vesicles to the base of the ciliary membrane. The BBSome complex, together with the LTZL1, controls SMO ciliary trafficking and contributes to the sonic hedgehog (SHH) pathway regulation. Required for proper BBSome complex assembly and its ciliary localization. This Homo sapiens (Human) protein is BBSome complex member BBS2.